The chain runs to 292 residues: 4-hydroxybenzoate octaprenyltransferase (292 aa).

Transmembrane regions (helical) follow at residues 23–43 (PIGIFLLLWPALWALWIAGEG), 47–67 (PGVAAVIVFGVVLMRAAGCVI), 98–118 (LILFMVLCLTAFALVLTMNWL), 141–161 (HLPQAYLGLAFGWAIPMTFAA), 164–184 (GSIPVVAWALYAATVLWALIY), 211–231 (YDREIIGALQIAMLAILAGIG), 233–253 (YLGLGGLYALGLAAAAGFSVY), and 270–290 (FLNNHWFGAAVFAGLFADYLW).

It belongs to the UbiA prenyltransferase family. It depends on Mg(2+) as a cofactor.

It is found in the cell inner membrane. The enzyme catalyses all-trans-octaprenyl diphosphate + 4-hydroxybenzoate = 4-hydroxy-3-(all-trans-octaprenyl)benzoate + diphosphate. The protein operates within cofactor biosynthesis; ubiquinone biosynthesis. Its function is as follows. Catalyzes the prenylation of para-hydroxybenzoate (PHB) with an all-trans polyprenyl group. Mediates the second step in the final reaction sequence of ubiquinone-8 (UQ-8) biosynthesis, which is the condensation of the polyisoprenoid side chain with PHB, generating the first membrane-bound Q intermediate 3-octaprenyl-4-hydroxybenzoate. The chain is 4-hydroxybenzoate octaprenyltransferase from Methylococcus capsulatus (strain ATCC 33009 / NCIMB 11132 / Bath).